The following is a 592-amino-acid chain: N-acetyltransferase ESCO2 (592 aa).

Phosphoserine occurs at positions 41 and 85. Residues 267 to 294 are disordered; it reads KSSVKVQNARSKNEEKLRKNPSGAVVSS. Position 309 is a phosphoserine (S309). Residues 384-408 form a CCHH-type zinc finger; that stretch reads TVCKSCGMIYTASNPEDEIQHLQHH.

This sequence belongs to the acetyltransferase family. ECO subfamily.

It localises to the nucleus. The protein resides in the chromosome. The catalysed reaction is L-lysyl-[protein] + acetyl-CoA = N(6)-acetyl-L-lysyl-[protein] + CoA + H(+). Functionally, acetyltransferase required for the establishment of sister chromatid cohesion. Couples the processes of cohesion and DNA replication to ensure that only sister chromatids become paired together. In contrast to the structural cohesins, the deposition and establishment factors are required only during the S phase. Acetylates the cohesin component SMC3. The polypeptide is N-acetyltransferase ESCO2 (Esco2) (Mus musculus (Mouse)).